Reading from the N-terminus, the 560-residue chain is Potassium-transporting ATPase potassium-binding subunit (560 aa).

12 helical membrane passes run 11–31, 63–83, 134–154, 179–199, 254–274, 282–302, 329–349, 356–376, 379–399, 417–437, 488–508, and 530–550; these read IFLL…VAFF, SYCT…YGLL, FVTM…TALI, LLPL…PQTF, VIEM…YGHA, WVLF…VYNA, FGIP…TGSV, LTPI…VFGG, VGFV…GLMV, LIVI…AIAL, VVML…AGSL, and VILF…VLIL.

Belongs to the KdpA family. In terms of assembly, the system is composed of three essential subunits: KdpA, KdpB and KdpC.

It is found in the cell membrane. Its function is as follows. Part of the high-affinity ATP-driven potassium transport (or Kdp) system, which catalyzes the hydrolysis of ATP coupled with the electrogenic transport of potassium into the cytoplasm. This subunit binds the extracellular potassium ions and delivers the ions to the membrane domain of KdpB through an intramembrane tunnel. This is Potassium-transporting ATPase potassium-binding subunit from Geobacillus kaustophilus (strain HTA426).